Reading from the N-terminus, the 51-residue chain is Glutamate dehydrogenase (51 aa).

K31 is a substrate binding site.

The protein belongs to the Glu/Leu/Phe/Val dehydrogenases family. In terms of assembly, homohexamer.

It localises to the mitochondrion matrix. The catalysed reaction is L-glutamate + NAD(+) + H2O = 2-oxoglutarate + NH4(+) + NADH + H(+). It carries out the reaction L-glutamate + NADP(+) + H2O = 2-oxoglutarate + NH4(+) + NADPH + H(+). Its function is as follows. Mitochondrial glutamate dehydrogenase that converts L-glutamate into alpha-ketoglutarate. Plays a key role in glutamine anaplerosis by producing alpha-ketoglutarate, an important intermediate in the tricarboxylic acid cycle. This is Glutamate dehydrogenase from Electrophorus electricus (Electric eel).